The following is a 113-amino-acid chain: Ig kappa chain V-II region 26-10 (113 aa).

Residues aspartate 1 to cysteine 23 form a framework-1 region. Cysteines 23 and 93 form a disulfide. The complementarity-determining-1 stretch occupies residues arginine 24–asparagine 39. Residues tryptophan 40 to tyrosine 54 are framework-2. The segment at lysine 55–serine 61 is complementarity-determining-2. The segment at glycine 62 to cysteine 93 is framework-3. The complementarity-determining-3 stretch occupies residues serine 94–threonine 102. The tract at residues phenylalanine 103–lysine 112 is framework-4.

The protein is Ig kappa chain V-II region 26-10 of Mus musculus (Mouse).